The following is a 217-amino-acid chain: ATP-dependent Clp protease proteolytic subunit 3 (217 aa).

Over residues 1-13 (MSPFTAGPAPART) the composition is skewed to low complexity. The tract at residues 1-23 (MSPFTAGPAPARTPRAEEGDTPA) is disordered. S108 functions as the Nucleophile in the catalytic mechanism. H133 is an active-site residue.

The protein belongs to the peptidase S14 family. Fourteen ClpP subunits assemble into 2 heptameric rings which stack back to back to give a disk-like structure with a central cavity, resembling the structure of eukaryotic proteasomes.

The protein localises to the cytoplasm. It carries out the reaction Hydrolysis of proteins to small peptides in the presence of ATP and magnesium. alpha-casein is the usual test substrate. In the absence of ATP, only oligopeptides shorter than five residues are hydrolyzed (such as succinyl-Leu-Tyr-|-NHMec, and Leu-Tyr-Leu-|-Tyr-Trp, in which cleavage of the -Tyr-|-Leu- and -Tyr-|-Trp bonds also occurs).. In terms of biological role, cleaves peptides in various proteins in a process that requires ATP hydrolysis. Has a chymotrypsin-like activity. Plays a major role in the degradation of misfolded proteins. This is ATP-dependent Clp protease proteolytic subunit 3 from Streptomyces coelicolor (strain ATCC BAA-471 / A3(2) / M145).